Consider the following 510-residue polypeptide: 2,3-bisphosphoglycerate-independent phosphoglycerate mutase (510 aa).

Mn(2+) is bound by residues aspartate 10 and serine 60. The active-site Phosphoserine intermediate is the serine 60. Residues histidine 121, 150-151 (RD), arginine 182, arginine 188, 252-255 (RPDR), and lysine 325 each bind substrate. Aspartate 392, histidine 396, aspartate 433, histidine 434, and histidine 451 together coordinate Mn(2+).

The protein belongs to the BPG-independent phosphoglycerate mutase family. Requires Mn(2+) as cofactor.

The protein resides in the plastid. Its subcellular location is the chloroplast. It carries out the reaction (2R)-2-phosphoglycerate = (2R)-3-phosphoglycerate. It functions in the pathway carbohydrate degradation; glycolysis; pyruvate from D-glyceraldehyde 3-phosphate: step 3/5. In terms of biological role, catalyzes the interconversion of 2-phosphoglycerate and 3-phosphoglycerate. This is 2,3-bisphosphoglycerate-independent phosphoglycerate mutase from Gracilaria tenuistipitata var. liui (Red alga).